Consider the following 107-residue polypeptide: Thioredoxin (107 aa).

In terms of domain architecture, Thioredoxin spans 2-107 (AGVLKNVTDD…ALLRPGPVPR (106 aa)). A disulfide bridge connects residues cysteine 33 and cysteine 36.

This sequence belongs to the thioredoxin family.

Component of the thioredoxin-thioredoxin reductase system. Participates in various redox reactions through the reversible oxidation of its active center dithiol to a disulfide and catalyzes dithiol-disulfide exchange reactions. This Streptomyces clavuligerus protein is Thioredoxin (trxA).